A 283-amino-acid polypeptide reads, in one-letter code: N-terminal Xaa-Pro-Lys N-methyltransferase 2 (283 aa).

Residues glycine 124, arginine 129, aspartate 146, 174 to 175, and glutamine 190 contribute to the S-adenosyl-L-methionine site; that span reads LQ.

Belongs to the methyltransferase superfamily. NTM1 family.

It localises to the nucleus. It catalyses the reaction N-terminal L-alanyl-L-prolyl-L-lysyl-[protein] + S-adenosyl-L-methionine = N-terminal N-methyl-L-alanyl-L-prolyl-L-lysyl-[protein] + S-adenosyl-L-homocysteine + H(+). The enzyme catalyses N-terminal L-prolyl-L-prolyl-L-lysyl-[protein] + S-adenosyl-L-methionine = N-terminal N-methyl-L-prolyl-L-prolyl-L-lysyl-[protein] + S-adenosyl-L-homocysteine + H(+). The catalysed reaction is N-terminal L-seryl-L-prolyl-L-lysyl-[protein] + S-adenosyl-L-methionine = N-terminal N-methyl-L-seryl-L-prolyl-L-lysyl-[protein] + S-adenosyl-L-homocysteine + H(+). Alpha N-methyltransferase that methylates the N-terminus of target proteins containing the N-terminal motif [Ala/Pro/Ser]-Pro-Lys when the initiator Met is cleaved. Specifically catalyzes monomethylation of exposed alpha-amino group of Ala or Ser residue in the [Ala/Ser]-Pro-Lys motif and Pro in the Pro-Pro-Lys motif. Predominantly functions as a mono-methyltransferase but is also able to di-/tri-methylate the GPKRIA peptide and di-methylate the PPKRIA peptide (in vitro). May activate NTMT1 by priming its substrates for trimethylation. This Mus musculus (Mouse) protein is N-terminal Xaa-Pro-Lys N-methyltransferase 2 (Ntmt2).